The primary structure comprises 263 residues: Proteasome subunit alpha (263 aa).

A disordered region spans residues 229 to 263; it reads AALLQDTPPDDADADADAGKKPANDGNLPPNDDKS.

The protein belongs to the peptidase T1A family. In terms of assembly, the 20S proteasome core is composed of 14 alpha and 14 beta subunits that assemble into four stacked heptameric rings, resulting in a barrel-shaped structure. The two inner rings, each composed of seven catalytic beta subunits, are sandwiched by two outer rings, each composed of seven alpha subunits. The catalytic chamber with the active sites is on the inside of the barrel. Has a gated structure, the ends of the cylinder being occluded by the N-termini of the alpha-subunits. Is capped by the proteasome-associated ATPase, ARC.

The protein localises to the cytoplasm. The protein operates within protein degradation; proteasomal Pup-dependent pathway. With respect to regulation, the formation of the proteasomal ATPase ARC-20S proteasome complex, likely via the docking of the C-termini of ARC into the intersubunit pockets in the alpha-rings, may trigger opening of the gate for substrate entry. Interconversion between the open-gate and close-gate conformations leads to a dynamic regulation of the 20S proteasome proteolysis activity. Functionally, component of the proteasome core, a large protease complex with broad specificity involved in protein degradation. The chain is Proteasome subunit alpha from Actinosynnema mirum (strain ATCC 29888 / DSM 43827 / JCM 3225 / NBRC 14064 / NCIMB 13271 / NRRL B-12336 / IMRU 3971 / 101).